The sequence spans 164 residues: uncharacterized protein (164 aa).

An N-terminal signal peptide occupies residues 1–22 (MKTNRSLVVIVSLITATLLLTA). Residue Cys-23 is the site of N-palmitoyl cysteine attachment. The S-diacylglycerol cysteine moiety is linked to residue Cys-23.

It localises to the cell membrane. This is an uncharacterized protein from Escherichia coli (strain K12).